Consider the following 572-residue polypeptide: Cleavage stimulation factor subunit 2 (572 aa).

Residue Ser-14 is modified to Phosphoserine. The RRM domain maps to 16–94 (RSVFVGNIPY…RALRVDNAAS (79 aa)). Residues 108-248 (APVIESPYGE…VNGAPPLMQA (141 aa)) form an interactions with CSTF3 and SYMPK region. Lys-189 participates in a covalent cross-link: Glycyl lysine isopeptide (Lys-Gly) (interchain with G-Cter in SUMO2). The segment at 208-230 (VHSAGPGSGSSVSMNQQNPQTPQ) is disordered. Position 308 is an omega-N-methylarginine (Arg-308). Residues 322–382 (LGDAPNDPRG…RGGPLTEPRP (61 aa)) are disordered. The segment covering 360–373 (PGHDSRGPPPHEMR) has biased composition (basic and acidic residues). One copy of the 1; approximate repeat lies at 410–414 (IDARA). Positions 410–464 (IDARAMEARGLDARGLEARAMEARAMEARAMEARAMEARAMEVRGMEARSMDTRG) are 11 X 5 AA tandem repeats of M-E-A-R-[AG]. Repeat 2 spans residues 415 to 419 (MEARG). A 3; approximate repeat occupies 420–424 (LDARG). One copy of the 4; approximate repeat lies at 425 to 429 (LEARA). A run of 4 repeats spans residues 430–434 (MEARA), 435–439 (MEARA), 440–444 (MEARA), and 445–449 (MEARA). One copy of the 9; approximate repeat lies at 450–454 (MEVRG). Residues 455–459 (MEARS) form repeat 10. Residues 460-464 (MDTRG) form an 11; approximate repeat. Omega-N-methylarginine occurs at positions 463 and 470. An interaction with RPO2TC1 region spans residues 509 to 572 (IQGGGQPGGF…EQIQKSTGAP (64 aa)). At Ser-519 the chain carries Phosphoserine.

The CSTF complex is composed of CSTF1 (50 kDa subunit), CSTF2 (64 kDa subunit) and CSTF3 (77 kDa subunit). CSTF2 directly interacts with CSTF3, SYMPK and RPO2TC1. Interacts with HSF1 in heat-stressed cells. Interacts with CPSF2, CPSF3 and FIP1L1. Interacts with DDX1.

Its subcellular location is the nucleus. One of the multiple factors required for polyadenylation and 3'-end cleavage of mammalian pre-mRNAs. This subunit is directly involved in the binding to pre-mRNAs. This is Cleavage stimulation factor subunit 2 (CSTF2) from Bos taurus (Bovine).